The chain runs to 201 residues: Zinc finger protein 239 (201 aa).

7 consecutive C2H2-type zinc fingers follow at residues 6 to 28, 34 to 56, 62 to 84, 90 to 112, 118 to 140, 146 to 168, and 174 to 196; these read YKCD…HSVH, FKCD…KRVH, YACE…QRVH, YKCG…RCTH, YQCY…LRVH, YHCG…QRVH, and YECS…QRVH.

This sequence belongs to the krueppel C2H2-type zinc-finger protein family. In terms of tissue distribution, preferentially expressed in transformed mouse cells.

It is found in the nucleus. Its function is as follows. May be involved in transcriptional regulation. The polypeptide is Zinc finger protein 239 (Znf239) (Mus musculus (Mouse)).